The primary structure comprises 444 residues: Jacalin-related lectin 11 (444 aa).

A2 carries the N-acetylalanine modification. 3 consecutive Jacalin-type lectin domains span residues 2 to 143 (ALKV…YFIK), 146 to 290 (SIQS…YYAP), and 298 to 442 (PEKL…HVTA).

It belongs to the jacalin lectin family.

The protein is Jacalin-related lectin 11 (JAL11) of Arabidopsis thaliana (Mouse-ear cress).